The sequence spans 325 residues: MSTNFEKHFQENVDECTLEQLRDILVNKSGKTVLANRFRALFNLKTVAEEFATKPEEAKKAIEYIAESFVNDKSELLKHEVAYVLGQTKNLDAAPTLRHVMLDQNQEPMVRHEAAEALGALGDKDSLDDLNKAAKEDPHVAVRETCELAINRINWTHGGAKDKENLQQSLYSSIDPAPPLPLEKDATIPELQALLNDPKQPLFQRYRAMFRLRDIGTDEAILALATGFSAESSLFKHEIAYVFGQIGSPAAVPSLIEVLGRKEEAPMVRHEAAEALGAIASPEVVDVLKSYLNDEVDVVRESCIVALDMYDYENSNELEYAPTAN.

An N-acetylserine modification is found at Ser2. HEAT-like PBS-type repeat units follow at residues 77–103 (LKHE…VMLD) and 110–136 (VRHE…AAKE). Positions 79, 80, 112, and 113 each coordinate Fe cation. Phosphoserine is present on Ser126. Residue Thr187 is modified to Phosphothreonine. HEAT-like PBS-type repeat units lie at residues 202-231 (LFQR…FSAE), 235-261 (FKHE…VLGR), and 268-294 (VRHE…YLND). Fe cation is bound by residues His237, Glu238, His270, and Glu271. Ser281 bears the Phosphoserine mark.

It belongs to the deoxyhypusine hydroxylase family. Fe(2+) is required as a cofactor.

It is found in the cytoplasm. The protein localises to the nucleus. It carries out the reaction [eIF5A protein]-deoxyhypusine + AH2 + O2 = [eIF5A protein]-hypusine + A + H2O. It participates in protein modification; eIF5A hypusination. Its function is as follows. Catalyzes the hydroxylation of the N(6)-(4-aminobutyl)-L-lysine intermediate to form hypusine, an essential post-translational modification only found in mature eIF-5A factor. This Saccharomyces cerevisiae (strain ATCC 204508 / S288c) (Baker's yeast) protein is Deoxyhypusine hydroxylase.